We begin with the raw amino-acid sequence, 805 residues long: Transcription factor E2f1 (805 aa).

Disordered regions lie at residues alanine 9–histidine 45, alanine 119–aspartate 208, and proline 224–alanine 255. 2 stretches are compositionally biased toward low complexity: residues asparagine 12 to tyrosine 37 and alanine 119 to glutamine 134. Composition is skewed to polar residues over residues arginine 144–threonine 154 and histidine 181–proline 195. The PIP-box K+4 motif signature appears at threonine 147–arginine 161. A compositionally biased stretch (low complexity) spans alanine 240–serine 249. Residues asparagine 253–arginine 318 mediate DNA binding. The segment at arginine 318–isoleucine 411 is dimerization. Serine 434 is modified (phosphoserine). Disordered regions lie at residues serine 578–serine 650 and glycine 714–serine 743. Composition is skewed to low complexity over residues alanine 595–asparagine 615 and serine 623–serine 636. The segment covering glutamine 637–glutamine 647 has biased composition (polar residues).

The protein belongs to the E2F/DP family. In terms of assembly, heterodimer of E2f and Dp. Cooperates to give sequence-specific DNA binding and optimal trans-activation. Interacts with PCNA. In terms of processing, ubiquitinated by the DCX(DTL) complex, also named CRL4(CDT2) complex, leading to its degradation during S phase. Ubiquitination by the DCX(DTL) complex is essential for cell cycle control and is PCNA-dependent: interacts with PCNA via its PIP-box, while the presence of the containing the 'K+4' motif in the PIP box, recruit the DCX(DTL) complex, leading to its degradation. In terms of tissue distribution, segmentally repeated expression throughout early embryos is restricted to the ventral nerve cord in later embryos.

It localises to the nucleus. In terms of biological role, transcriptional activator that binds to E2f sites. Required for wild-type growth in mitotic and polytene tissues, Contributes to the expression of replication genes at the G1-S transition and Cyclin E. Activates cell proliferation in wing imaginal disk, which requires expression of vg. This Drosophila melanogaster (Fruit fly) protein is Transcription factor E2f1.